A 343-amino-acid chain; its full sequence is UDP-3-O-acylglucosamine N-acyltransferase (343 aa).

Histidine 248 serves as the catalytic Proton acceptor.

This sequence belongs to the transferase hexapeptide repeat family. LpxD subfamily. As to quaternary structure, homotrimer.

The enzyme catalyses a UDP-3-O-[(3R)-3-hydroxyacyl]-alpha-D-glucosamine + a (3R)-hydroxyacyl-[ACP] = a UDP-2-N,3-O-bis[(3R)-3-hydroxyacyl]-alpha-D-glucosamine + holo-[ACP] + H(+). It functions in the pathway bacterial outer membrane biogenesis; LPS lipid A biosynthesis. Functionally, catalyzes the N-acylation of UDP-3-O-acylglucosamine using 3-hydroxyacyl-ACP as the acyl donor. Is involved in the biosynthesis of lipid A, a phosphorylated glycolipid that anchors the lipopolysaccharide to the outer membrane of the cell. In Microcystis aeruginosa (strain NIES-843 / IAM M-2473), this protein is UDP-3-O-acylglucosamine N-acyltransferase.